Here is a 711-residue protein sequence, read N- to C-terminus: MLNPIVRKFQYGQHTVTLETGMMARQATAAVMVSMDDTAVFVTVVGQKKAKPGQDFFPLTVNYQERTYAAGRIPGSFFRREGRPSEGETLIARLIDRPIRPLFPEGFVNEVQVIATVVSVNPQVNPDIVAMIGASAALSLSGIPFNGPIGAARVGYINDQYVLNPTQDELKESKLDLVVAGTEAAVLMVESEAELLSEDQMLGAVVFGHEQQQVVIQNINELVKEAGKPRWDWQPEPVNEALNARVAALAEARLSDAYRITDKQERYAQVDVIKSETIATLLAEDETLDENELGEILHAIEKNVVRSRVLAGEPRIDGREKDMIRGLDVRTGVLPRTHGSALFTRGETQALVTATLGTARDAQVLDELMGERTDTFLFHYNFPPYSVGETGMVGSPKRREIGHGRLAKRSVLAVMPDMDKFPYTVRVVSEITESNGSSSMASVCGASLALMDAGVPIKAAVAGIAMGLVKEGDNYVVLSDILGDEDHLGDMDFKVAGSREGISALQMDIKIEGITKEIMQVALNQAKGARLHILGVMEQAINAPRGDISEFAPRIHTIKINPDKIKDVIGKGGSVIRALTEETGTTIEIEDDGTVKIAATDGEKAKHAIRRIEEITAEIEVGRVYTGKVTRIVDFGAFVAIGGGKEGLVHISQIADKRVEKVTDYLQMGQEVPVKVLEVDRQGRIRLSIKEATEQSQPAAAPEAPAAEQGE.

Positions 486 and 492 each coordinate Mg(2+). Positions 553-612 constitute a KH domain; sequence PRIHTIKINPDKIKDVIGKGGSVIRALTEETGTTIEIEDDGTVKIAATDGEKAKHAIRRI. An S1 motif domain is found at 622-690; the sequence is GRVYTGKVTR…RQGRIRLSIK (69 aa). Residues 689–711 form a disordered region; the sequence is IKEATEQSQPAAAPEAPAAEQGE. Low complexity predominate over residues 694 to 711; that stretch reads EQSQPAAAPEAPAAEQGE.

The protein belongs to the polyribonucleotide nucleotidyltransferase family. In terms of assembly, component of the RNA degradosome, which is a multiprotein complex involved in RNA processing and mRNA degradation. The cofactor is Mg(2+).

Its subcellular location is the cytoplasm. The enzyme catalyses RNA(n+1) + phosphate = RNA(n) + a ribonucleoside 5'-diphosphate. In terms of biological role, involved in mRNA degradation. Catalyzes the phosphorolysis of single-stranded polyribonucleotides processively in the 3'- to 5'-direction. This Shigella boydii serotype 4 (strain Sb227) protein is Polyribonucleotide nucleotidyltransferase.